The following is a 477-amino-acid chain: MRKALRSLLAASMLIGAIGAGSATAEAASITAPQADIKDRILKIPGMKFVEEKPYQGYRYLVMTYRQPVDHRNPGKGTFEQRFTLLHKDTDRPTVFFTSGYNVSTNPSRSEPTRIVDGNQVSMEYRFFTPSRPQPADWSKLDIWQAASDQHRLYQALKPVYGKNWLATGGSKGGMTATYFRRFYPNDMNGTVAYVAPNDVNDKEDSAYDKFFQNVGDKACRTQLNSVQREALVRRDEIVARYEKWAKENGKTFKVVGSADKAYENVVLDLVWSFWQYHLQSDCASVPATKASTDELYKFIDDISGFDGYTDQGLERFTPYYYQAGTQLGAPTVKNPHLKGVLRYPGINQPRSYVPRDIPMTFRPGAMADVDRWVREDSRNMLFVYGQNDPWSGEPFRLGKGAAARHDYRFYAPGGNHGSNIAQLVADERAKATAEVLKWAGVAPQAVQKDEKAAKPLAPFDAKLDRVKNDKQSALRP.

A signal peptide spans 1–27 (MRKALRSLLAASMLIGAIGAGSATAEA). A propeptide spanning residues 28-33 (ASITAP) is cleaved from the precursor. Residues 448 to 477 (QKDEKAAKPLAPFDAKLDRVKNDKQSALRP) are disordered. Basic and acidic residues predominate over residues 462–477 (AKLDRVKNDKQSALRP).

This sequence belongs to the peptidase S37 family.

The protein resides in the secreted. The protein localises to the cell surface. Its activity is regulated as follows. Completely inhibited by the serine protease inhibitor phenylmethylsulfonyl fluoride. Partially inhibited by the serine protease inhibitor Pefabloc. Not inhibited by cysteine proteinase-specific or metalloproteinase-specific inhibitors. Not inhibited by prolinal or its derivatives. EDTA and EGTA both partially inhibit this enzyme. EDTA has no effect on activity. Has proline-specific tripeptidyl aminopeptidase and tetrapeptidyl aminopeptidase activity. Activity is highest against tripeptides containing an Ala-Pro motif. Involved in the final processing of transglutaminase, by removing either the tetrapeptide Phe-Arg-Ala-Pro left after TAMEP or SAM-P45 hydrolysis, or the tripeptide Arg-Ala-Pro left after SGMP II hydrolysis in a single step. This chain is Prolyl tri/tetrapeptidyl aminopeptidase (ptp), found in Streptomyces mobaraensis (Streptoverticillium mobaraense).